We begin with the raw amino-acid sequence, 739 residues long: Lysyl oxidase homolog 3A (739 aa).

An N-terminal signal peptide occupies residues 1–25 (MLRSELRDMVVAMVLWGILLPFCLS). 4 consecutive SRCR domains span residues 38-139 (FRLA…VICK), 166-272 (LRPL…VSCV), 293-393 (MRLK…VICN), and 403-511 (MRLT…VICS). 12 disulfides stabilise this stretch: Cys-64/Cys-128, Cys-77/Cys-138, Cys-108/Cys-118, Cys-196/Cys-261, Cys-209/Cys-271, Cys-238/Cys-248, Cys-318/Cys-382, Cys-331/Cys-392, Cys-362/Cys-372, Cys-433/Cys-497, Cys-446/Cys-510, and Cys-479/Cys-489. Asn-256 is a glycosylation site (N-linked (GlcNAc...) asparagine). Asn-468 carries an N-linked (GlcNAc...) asparagine glycan. A glycan (N-linked (GlcNAc...) asparagine) is linked at Asn-611. The lysine tyrosylquinone (Lys-Tyr) cross-link spans 620-656 (KASFCLEDTECHEGVSKRYECANFGEQGITVGCWDLY). Tyr-656 is subject to 2',4',5'-topaquinone.

This sequence belongs to the lysyl oxidase family. Cu cation is required as a cofactor. The cofactor is lysine tyrosylquinone residue. In terms of processing, the lysine tyrosylquinone cross-link (LTQ) is generated by condensation of the epsilon-amino group of a lysine with a topaquinone produced by oxidation of tyrosine.

It localises to the secreted. The protein localises to the extracellular space. Its subcellular location is the cytoplasm. It is found in the nucleus. It catalyses the reaction L-lysyl-[protein] + O2 + H2O = (S)-2-amino-6-oxohexanoyl-[protein] + H2O2 + NH4(+). The enzyme catalyses N(6)-acetyl-L-lysyl-[protein] + O2 + H2O = acetamide + (S)-2-amino-6-oxohexanoyl-[protein] + H2O2. Its function is as follows. Protein-lysine 6-oxidase that mediates the oxidation of peptidyl lysine residues to allysine in target proteins. Catalyzes the post-translational oxidative deamination of peptidyl lysine residues in precursors of elastin and different types of collagens, a prerequisite in the formation of cross-links between collagens and elastin. Can mediate oxidation of lysine residues that are acetylated. Also able to catalyze deacetylation of lysine residues. In Danio rerio (Zebrafish), this protein is Lysyl oxidase homolog 3A.